A 176-amino-acid polypeptide reads, in one-letter code: Small ribosomal subunit protein uS5 (176 aa).

One can recognise an S5 DRBM domain in the interval 11–74 (LSEVLVDVNR…QAAKKRMMKV (64 aa)).

Belongs to the universal ribosomal protein uS5 family. Part of the 30S ribosomal subunit. Contacts proteins S4 and S8.

In terms of biological role, with S4 and S12 plays an important role in translational accuracy. Functionally, located at the back of the 30S subunit body where it stabilizes the conformation of the head with respect to the body. The polypeptide is Small ribosomal subunit protein uS5 (Rickettsia rickettsii (strain Iowa)).